The chain runs to 407 residues: D-inositol 3-phosphate glycosyltransferase (407 aa).

Residue H2 coordinates 1D-myo-inositol 3-phosphate. Residues Q8–P9 and G16 contribute to the UDP-N-acetyl-alpha-D-glucosamine site. Residues D13–N18, R71, Y104, T128, and R148 contribute to the 1D-myo-inositol 3-phosphate site. Residues R222 and K227 each coordinate UDP-N-acetyl-alpha-D-glucosamine. Residues Y297, R298, and A300 each contribute to the Mg(2+) site. UDP-N-acetyl-alpha-D-glucosamine contacts are provided by E310 and E318. T324 is a Mg(2+) binding site.

The protein belongs to the glycosyltransferase group 1 family. MshA subfamily. As to quaternary structure, homodimer.

The enzyme catalyses 1D-myo-inositol 3-phosphate + UDP-N-acetyl-alpha-D-glucosamine = 1D-myo-inositol 2-acetamido-2-deoxy-alpha-D-glucopyranoside 3-phosphate + UDP + H(+). Its function is as follows. Catalyzes the transfer of a N-acetyl-glucosamine moiety to 1D-myo-inositol 3-phosphate to produce 1D-myo-inositol 2-acetamido-2-deoxy-glucopyranoside 3-phosphate in the mycothiol biosynthesis pathway. The sequence is that of D-inositol 3-phosphate glycosyltransferase from Frankia alni (strain DSM 45986 / CECT 9034 / ACN14a).